A 662-amino-acid polypeptide reads, in one-letter code: DNA ligase (662 aa).

Residues 32 to 36, 81 to 82, and E112 contribute to the NAD(+) site; these read DAEYD and SL. The active-site N6-AMP-lysine intermediate is K114. Residues R135, E170, K286, and K310 each contribute to the NAD(+) site. Residues C402, C405, C420, and C425 each contribute to the Zn(2+) site. Residues 583-662 enclose the BRCT domain; sequence PKGGPLTGST…AELHAMLRGE (80 aa).

Belongs to the NAD-dependent DNA ligase family. LigA subfamily. It depends on Mg(2+) as a cofactor. Mn(2+) is required as a cofactor.

It catalyses the reaction NAD(+) + (deoxyribonucleotide)n-3'-hydroxyl + 5'-phospho-(deoxyribonucleotide)m = (deoxyribonucleotide)n+m + AMP + beta-nicotinamide D-nucleotide.. Its function is as follows. DNA ligase that catalyzes the formation of phosphodiester linkages between 5'-phosphoryl and 3'-hydroxyl groups in double-stranded DNA using NAD as a coenzyme and as the energy source for the reaction. It is essential for DNA replication and repair of damaged DNA. This Solibacter usitatus (strain Ellin6076) protein is DNA ligase.